We begin with the raw amino-acid sequence, 82 residues long: MSDKIRTLQGRVTSNKMDKTITVAIERQVKHPIYGKYIKRTTKIHAHDEANQCNEGDVVAIRECRPLSKTKSWTLVEVVSKA.

It belongs to the universal ribosomal protein uS17 family. Part of the 30S ribosomal subunit.

One of the primary rRNA binding proteins, it binds specifically to the 5'-end of 16S ribosomal RNA. The sequence is that of Small ribosomal subunit protein uS17 from Shewanella sp. (strain MR-7).